Reading from the N-terminus, the 448-residue chain is MSTTNAINGNLYEQLHQGRTNMYKSKVDVVLGAQWGDEGKGKVVDMLASEVDIVCRCQGGNNAGHTVVANGTEFDFHLLPSGVVNEKCISVIGNGVVIHLPSLFDEVLKNEAKGLQHLEHRLIISDRAHLVFDFHQHVDGMQEAEKGGKSLGTTKKGIGPAYSSKATRNGIRVGELLGDFNAFSDKFKLIVATHLRLFPSINVDVEAELTRYRDYAEKVRPYVKDTICFLHTALRNGKTILVEGANAAMLDIDFGTYPYVTSSNCSIGGVLTGLGLPPQTIGEVIGVVKAYTTRVGDGPFPSEQLNEIGDLLQTRGFEVGVTTKRKRRCGWLDIPLLRYTSLVNGYTCICLTKLDILDTLPEIKVAVSYKKANGDKLDHFPGTIAELGNIEVEYAVLPGWQTSTEHIRNFKELPENAQHYVRFLEKELSVPVRWVGVGKGRESIINVH.

GTP-binding positions include 36–42 (GDEGKGK) and 64–66 (GHT). The active-site Proton acceptor is the Asp-37. Mg(2+)-binding residues include Asp-37 and Gly-64. Residues 37–40 (DEGK), 62–65 (NAGH), Thr-154, Arg-168, Asn-246, Thr-261, and Arg-325 contribute to the IMP site. The active-site Proton donor is His-65. Position 321 to 327 (321 to 327 (VTTKRKR)) interacts with substrate. Residues Arg-327, 353–355 (KLD), and 436–438 (GVG) each bind GTP.

It belongs to the adenylosuccinate synthetase family. As to quaternary structure, homodimer. The cofactor is Mg(2+).

The protein localises to the cytoplasm. The catalysed reaction is IMP + L-aspartate + GTP = N(6)-(1,2-dicarboxyethyl)-AMP + GDP + phosphate + 2 H(+). It functions in the pathway purine metabolism; AMP biosynthesis via de novo pathway; AMP from IMP: step 1/2. Its function is as follows. Plays an important role in the de novo pathway and in the salvage pathway of purine nucleotide biosynthesis. Catalyzes the first committed step in the biosynthesis of AMP from IMP. This Drosophila persimilis (Fruit fly) protein is Adenylosuccinate synthetase.